The chain runs to 340 residues: 4-hydroxy-3-methylbut-2-enyl diphosphate reductase (340 aa).

Cys-13 provides a ligand contact to [4Fe-4S] cluster. Residues His-42 and His-75 each contribute to the (2E)-4-hydroxy-3-methylbut-2-enyl diphosphate site. 2 residues coordinate dimethylallyl diphosphate: His-42 and His-75. Residues His-42 and His-75 each coordinate isopentenyl diphosphate. [4Fe-4S] cluster is bound at residue Cys-97. Residue His-125 participates in (2E)-4-hydroxy-3-methylbut-2-enyl diphosphate binding. A dimethylallyl diphosphate-binding site is contributed by His-125. His-125 lines the isopentenyl diphosphate pocket. Glu-127 acts as the Proton donor in catalysis. Thr-165 contacts (2E)-4-hydroxy-3-methylbut-2-enyl diphosphate. Cys-195 contacts [4Fe-4S] cluster. Positions 223, 224, 225, and 267 each coordinate (2E)-4-hydroxy-3-methylbut-2-enyl diphosphate. Residues Ser-223, Ser-224, Asn-225, and Ser-267 each coordinate dimethylallyl diphosphate. Positions 223, 224, 225, and 267 each coordinate isopentenyl diphosphate. The interval 317–340 (NNLDNKTAASEEADSLSNDTEQEA) is disordered. Positions 331 to 340 (SLSNDTEQEA) are enriched in polar residues.

This sequence belongs to the IspH family. It depends on [4Fe-4S] cluster as a cofactor.

It carries out the reaction isopentenyl diphosphate + 2 oxidized [2Fe-2S]-[ferredoxin] + H2O = (2E)-4-hydroxy-3-methylbut-2-enyl diphosphate + 2 reduced [2Fe-2S]-[ferredoxin] + 2 H(+). The enzyme catalyses dimethylallyl diphosphate + 2 oxidized [2Fe-2S]-[ferredoxin] + H2O = (2E)-4-hydroxy-3-methylbut-2-enyl diphosphate + 2 reduced [2Fe-2S]-[ferredoxin] + 2 H(+). It participates in isoprenoid biosynthesis; dimethylallyl diphosphate biosynthesis; dimethylallyl diphosphate from (2E)-4-hydroxy-3-methylbutenyl diphosphate: step 1/1. Its pathway is isoprenoid biosynthesis; isopentenyl diphosphate biosynthesis via DXP pathway; isopentenyl diphosphate from 1-deoxy-D-xylulose 5-phosphate: step 6/6. Catalyzes the conversion of 1-hydroxy-2-methyl-2-(E)-butenyl 4-diphosphate (HMBPP) into a mixture of isopentenyl diphosphate (IPP) and dimethylallyl diphosphate (DMAPP). Acts in the terminal step of the DOXP/MEP pathway for isoprenoid precursor biosynthesis. This Zymomonas mobilis subsp. mobilis (strain ATCC 31821 / ZM4 / CP4) protein is 4-hydroxy-3-methylbut-2-enyl diphosphate reductase.